A 474-amino-acid polypeptide reads, in one-letter code: tRNA-2-methylthio-N(6)-dimethylallyladenosine synthase (474 aa).

Residues 3 to 120 (KKLHIKTWGC…LPEMINHVQG (118 aa)) form the MTTase N-terminal domain. Residues C12, C49, C83, C157, C161, and C164 each coordinate [4Fe-4S] cluster. One can recognise a Radical SAM core domain in the interval 143–375 (RAEGPTAFVS…QQRITQQAME (233 aa)). A TRAM domain is found at 378–441 (REMVGTVQRI…ASSLRGILLR (64 aa)).

This sequence belongs to the methylthiotransferase family. MiaB subfamily. As to quaternary structure, monomer. The cofactor is [4Fe-4S] cluster.

The protein resides in the cytoplasm. The catalysed reaction is N(6)-dimethylallyladenosine(37) in tRNA + (sulfur carrier)-SH + AH2 + 2 S-adenosyl-L-methionine = 2-methylsulfanyl-N(6)-dimethylallyladenosine(37) in tRNA + (sulfur carrier)-H + 5'-deoxyadenosine + L-methionine + A + S-adenosyl-L-homocysteine + 2 H(+). In terms of biological role, catalyzes the methylthiolation of N6-(dimethylallyl)adenosine (i(6)A), leading to the formation of 2-methylthio-N6-(dimethylallyl)adenosine (ms(2)i(6)A) at position 37 in tRNAs that read codons beginning with uridine. This is tRNA-2-methylthio-N(6)-dimethylallyladenosine synthase from Yersinia enterocolitica serotype O:8 / biotype 1B (strain NCTC 13174 / 8081).